A 258-amino-acid chain; its full sequence is MDRPTTYPMDQPAGFRDAQGRHGGVVLPARPEPIALDPATTFLIVVDVQNAYASPGGYLDRAGFDVSGTGPVIARIARAVAAARAAGIPVLWFQNGWDPAYVEAGGPGSPNWHKSNALKTMRRNPEANTQLLAKGSWDYALVDALTPEPGDIVMGKPRYSGFYNTPLDSTLRARGVTTLVFTGIATNVCVESTLRDGFHREYFGIVLADATHQAGPESLHRAALANIETFFGWVSDVAAFESALGVPSRAPAGADLAG.

The interval 1 to 23 (MDRPTTYPMDQPAGFRDAQGRHG) is disordered. D47 functions as the Proton acceptor in the catalytic mechanism. K156 is an active-site residue. The active-site Nucleophile is C189.

This sequence belongs to the isochorismatase family. RutB subfamily.

It carries out the reaction (Z)-3-ureidoacrylate + H2O + H(+) = (Z)-3-aminoacrylate + NH4(+) + CO2. The enzyme catalyses (Z)-3-ureidoacrylate + H2O = (Z)-3-aminoacrylate + carbamate + H(+). It catalyses the reaction (Z)-2-methylureidoacrylate + H2O + H(+) = (Z)-2-methylaminoacrylate + NH4(+) + CO2. Functionally, hydrolyzes ureidoacrylate to form aminoacrylate and carbamate. The carbamate hydrolyzes spontaneously, thereby releasing one of the nitrogen atoms of the pyrimidine ring as ammonia and one of its carbon atoms as CO2. The sequence is that of Ureidoacrylate amidohydrolase RutB from Methylobacterium radiotolerans (strain ATCC 27329 / DSM 1819 / JCM 2831 / NBRC 15690 / NCIMB 10815 / 0-1).